The sequence spans 385 residues: Acetylornithine aminotransferase (385 aa).

Pyridoxal 5'-phosphate-binding positions include 94 to 95 and Phe-126; that span reads GT. Arg-129 contacts N(2)-acetyl-L-ornithine. 211–214 is a binding site for pyridoxal 5'-phosphate; the sequence is DEVQ. Lys-240 bears the N6-(pyridoxal phosphate)lysine mark. Thr-267 contributes to the N(2)-acetyl-L-ornithine binding site. Thr-268 provides a ligand contact to pyridoxal 5'-phosphate.

The protein belongs to the class-III pyridoxal-phosphate-dependent aminotransferase family. ArgD subfamily. In terms of assembly, homodimer. It depends on pyridoxal 5'-phosphate as a cofactor.

The protein resides in the cytoplasm. It carries out the reaction N(2)-acetyl-L-ornithine + 2-oxoglutarate = N-acetyl-L-glutamate 5-semialdehyde + L-glutamate. The protein operates within amino-acid biosynthesis; L-arginine biosynthesis; N(2)-acetyl-L-ornithine from L-glutamate: step 4/4. This is Acetylornithine aminotransferase from Thermotoga maritima (strain ATCC 43589 / DSM 3109 / JCM 10099 / NBRC 100826 / MSB8).